The chain runs to 27 residues: U1-poneritoxin-Na3a (27 aa).

This sequence belongs to the ponericin-G family. As to expression, expressed by the venom gland.

The protein localises to the secreted. Functionally, has activity against some Gram-positive bacteria and S.cerevisiae. Has a non-hemolytic activity. This is U1-poneritoxin-Na3a from Neoponera apicalis (Ant).